The following is a 485-amino-acid chain: MQLYNTMTRTKEPFVSRVPGKVAMYVCGITAYDLCHIGHARSSVVFDVLVRYLRHIGFDVTFVRNFTDVDDKIIKKANAEGTTSQEIAERYIATFYEDMDKLGILRPNAEPKATEYIGEMASLAQRLIDSGHAYRTPSGDVYFRVRSFAGYGKLSGRDVEDMRSGARVAPGEEKEDPLDFALWKASKPGEPVWESPFGPGRPGWHLECSAMSEKLLGMPIDIHGGGQDLIFPHHENEIAQSEAAIGGEFCRYWVHNGFVRINTEKMSKSLGNFITIRDIYARYLPEVLRFFLLSSQYRSPLDYSDQGLDEAEKGIKRIYAAKVQMEQALGRAKWSETKLPADVTEELSRHEEGFTAAMDDDLNTAQAMGHVFGLVRLAGRLMEDKTLAKSRETAEVLGRILADFGVWAEVLGVFGTDATAFLADLKACRLTRLGIDAARVDGLVAERQDARKAKDFARSDAIRDELASLGVTVMDTPTGPQWDIA.

Residue C27 participates in Zn(2+) binding. A 'HIGH' region motif is present at residues 29-39 (ITAYDLCHIGH). 3 residues coordinate Zn(2+): C208, H233, and E237. The 'KMSKS' region signature appears at 265-269 (KMSKS). K268 contributes to the ATP binding site.

This sequence belongs to the class-I aminoacyl-tRNA synthetase family. Monomer. Zn(2+) is required as a cofactor.

The protein resides in the cytoplasm. The enzyme catalyses tRNA(Cys) + L-cysteine + ATP = L-cysteinyl-tRNA(Cys) + AMP + diphosphate. In Solidesulfovibrio magneticus (strain ATCC 700980 / DSM 13731 / RS-1) (Desulfovibrio magneticus), this protein is Cysteine--tRNA ligase.